Here is a 135-residue protein sequence, read N- to C-terminus: NADH-quinone oxidoreductase subunit K (135 aa).

3 helical membrane-spanning segments follow: residues Val33–Gly53, Phe63–Val83, and Ile95–Leu115.

It belongs to the complex I subunit 4L family. In terms of assembly, NDH-1 is composed of 14 different subunits. Subunits NuoA, H, J, K, L, M, N constitute the membrane sector of the complex.

It localises to the cell inner membrane. The catalysed reaction is a quinone + NADH + 5 H(+)(in) = a quinol + NAD(+) + 4 H(+)(out). NDH-1 shuttles electrons from NADH, via FMN and iron-sulfur (Fe-S) centers, to quinones in the respiratory chain. The immediate electron acceptor for the enzyme in this species is believed to be ubiquinone. Couples the redox reaction to proton translocation (for every two electrons transferred, four hydrogen ions are translocated across the cytoplasmic membrane), and thus conserves the redox energy in a proton gradient. This is NADH-quinone oxidoreductase subunit K from Psychrobacter cryohalolentis (strain ATCC BAA-1226 / DSM 17306 / VKM B-2378 / K5).